The sequence spans 73 residues: Omega-conotoxin CVID (73 aa).

Positions 1 to 22 (MKLTCVVIVAVLLLTACQLITA) are cleaved as a signal peptide. Positions 23–45 (DDSRGTQKHRALRSDTKLSMSTR) are excised as a propeptide. 3 disulfide bridges follow: cysteine 46–cysteine 61, cysteine 53–cysteine 65, and cysteine 60–cysteine 72. A Cysteine amide modification is found at cysteine 72.

Belongs to the conotoxin O1 superfamily. Expressed by the venom duct.

It localises to the secreted. Omega-conotoxins act at presynaptic membranes, they bind and block voltage-gated calcium channels. This toxin inhibits neurotransmitter release, it blocks N-type calcium channels, probably a N-type (Cav2.2/CACNA1B) calcium channel variant. This Conus catus (Cat cone) protein is Omega-conotoxin CVID.